The sequence spans 246 residues: Eukaryotic translation initiation factor 6 (246 aa).

Phosphoserine; by CK1 occurs at positions 174 and 175.

The protein belongs to the eIF-6 family. In terms of assembly, monomer. Associates with the 60S ribosomal subunit. Phosphorylation at Ser-174 and Ser-175 promotes nuclear export.

The protein localises to the cytoplasm. Its subcellular location is the nucleus. It localises to the nucleolus. In terms of biological role, binds to the 60S ribosomal subunit and prevents its association with the 40S ribosomal subunit to form the 80S initiation complex in the cytoplasm. Is also involved in ribosome biogenesis. Associates with pre-60S subunits in the nucleus and is involved in its nuclear export. The chain is Eukaryotic translation initiation factor 6 (tif-6) from Neurospora crassa (strain ATCC 24698 / 74-OR23-1A / CBS 708.71 / DSM 1257 / FGSC 987).